Here is a 123-residue protein sequence, read N- to C-terminus: F-box protein PP2-B3 (123 aa).

The F-box domain maps to 10–56 (PSPFDGLPENCISNIISFTTPRDACFAASVSKAFESAVQSDSVWEKF).

The polypeptide is F-box protein PP2-B3 (PP2B3) (Arabidopsis thaliana (Mouse-ear cress)).